Here is a 453-residue protein sequence, read N- to C-terminus: Choline kinase alpha (453 aa).

The segment at 22-81 is disordered; sequence CGGNAAPTPGVGQQRDAAGELESKQLGGRTQPLALPPPPPPPLPLPPPPSPPLADEQPEP. The segment covering 55 to 73 has biased composition (pro residues); it reads ALPPPPPPPLPLPPPPSPP. Position 71 is a phosphoserine (Ser-71). ATP-binding positions include 113 to 119, Arg-142, and 203 to 209; these read RGGLSNM and QFIPSRR. Phosphocholine is bound at residue 115–117; the sequence is GLS. Lys-243 is modified (N6-acetyllysine). Ser-275 bears the Phosphoserine mark. Residues Gln-304 and Asp-326 each coordinate ATP.

It belongs to the choline/ethanolamine kinase family. As to quaternary structure, homodimer. Heterodimer with CHKB. Monomer; acetylation by KAT5 promotes dissociation of the homodimer and monomerization. Phosphorylated at Ser-275 by AMPK in response to glucose deprivation, leading to localization to lipid droplets. In terms of processing, acetylated by KAT5 at Lys-243 following phosphorylation by AMPK, leading to monomerization and conversion into a tyrosine-protein kinase. In terms of tissue distribution, expressed ubiquitously with the highest level in testis.

It is found in the cytoplasm. It localises to the cytosol. The protein localises to the lipid droplet. It carries out the reaction choline + ATP = phosphocholine + ADP + H(+). The enzyme catalyses ethanolamine + ATP = phosphoethanolamine + ADP + H(+). The catalysed reaction is L-tyrosyl-[protein] + ATP = O-phospho-L-tyrosyl-[protein] + ADP + H(+). It participates in phospholipid metabolism; phosphatidylcholine biosynthesis; phosphocholine from choline: step 1/1. Its pathway is phospholipid metabolism; phosphatidylethanolamine biosynthesis; phosphatidylethanolamine from ethanolamine: step 1/3. Plays a key role in phospholipid biosynthesis by catalyzing the phosphorylation of free choline to phosphocholine, the first step in phosphatidylcholine biosynthesis. Also phosphorylates ethanolamine, thereby contributing to phosphatidylethanolamine biosynthesis. Has higher activity with choline. Its function is as follows. This isoform plays a key role in lipolysis of lipid droplets following glucose deprivation. In response to glucose deprivation, phosphorylated by AMPK, promoting localization to lipid droplets. Phosphorylation is followed by acetylation by KAT5, leading to dissociation of the homodimer into a monomer. Monomeric CHKA isoform 1 is converted into a tyrosine-protein kinase, which phosphorylates lipid droplet structural proteins PLIN2 and PLIN3, leading to lipolysis of lipid droplets. This is Choline kinase alpha (Chka) from Mus musculus (Mouse).